The sequence spans 578 residues: Trehalase (578 aa).

Residues 1-19 (MPGSTWELHLLLLLGLGLG) form the signal peptide. A glycan (N-linked (GlcNAc...) asparagine) is linked at Asn78. Residues Arg168, 175–176 (WD), Asn212, and 221–223 (RSQ) each bind substrate. Asn261 carries an N-linked (GlcNAc...) asparagine glycan. Substrate contacts are provided by residues 286 to 288 (RPE) and Gly319. Catalysis depends on Asp321, which acts as the Proton donor/acceptor. Asn369 carries an N-linked (GlcNAc...) asparagine glycan. Glu514 serves as the catalytic Proton donor/acceptor. Substrate is bound at residue Glu528. Ser555 is lipidated: GPI-anchor amidated serine. Residues 556-578 (GTQLALLEPHCLAAALLLSFLTR) constitute a propeptide, removed in mature form.

It belongs to the glycosyl hydrolase 37 family. Homodimer; disulfide-linked. In terms of tissue distribution, expressed in small intestine, kidney, and to a lesser extent in liver.

Its subcellular location is the cell membrane. The catalysed reaction is alpha,alpha-trehalose + H2O = alpha-D-glucose + beta-D-glucose. In terms of biological role, intestinal trehalase is probably involved in the hydrolysis of ingested trehalose. The protein is Trehalase (TREH) of Oryctolagus cuniculus (Rabbit).